The following is a 311-amino-acid chain: Coproporphyrin III ferrochelatase 1 (311 aa).

Fe-coproporphyrin III contacts are provided by residues Tyr12, Arg29, 45 to 46 (RY), Ser53, and Tyr124. Fe(2+) contacts are provided by His182 and Glu263.

It belongs to the ferrochelatase family.

The protein localises to the cytoplasm. It carries out the reaction Fe-coproporphyrin III + 2 H(+) = coproporphyrin III + Fe(2+). Its pathway is porphyrin-containing compound metabolism; protoheme biosynthesis. Involved in coproporphyrin-dependent heme b biosynthesis. Catalyzes the insertion of ferrous iron into coproporphyrin III to form Fe-coproporphyrin III. In Bacillus anthracis, this protein is Coproporphyrin III ferrochelatase 1.